The primary structure comprises 307 residues: Cytochrome c1, heme protein, mitochondrial (307 aa).

Residues 1–56 (MFQFVKKKNEFLKFARLGSRAFTQNAQKTHSKGSNIALVSSSLLSVGMIALYYNVY) constitute a mitochondrion transit peptide. At 57–269 (GPSLSAGTPK…EPELDIRKKM (213 aa)) the chain is on the mitochondrial intermembrane side. The region spanning 89 to 259 (ASLRRGFQVY…DVVNFLHWAS (171 aa)) is the Cytochrome c domain. Cys102, Cys105, His106, and Met225 together coordinate heme c. A helical membrane pass occupies residues 270–287 (GFQVITVLTILTALSMWY). The Mitochondrial matrix segment spans residues 288–307 (KRFKWTPIKNRKIFYQRPIK).

It belongs to the cytochrome c family. As to quaternary structure, component of the ubiquinol-cytochrome c oxidoreductase (cytochrome b-c1 complex, complex III, CIII), a multisubunit enzyme composed of 3 respiratory subunits cytochrome b, cytochrome c1 and Rieske protein, 2 core protein subunits, and additional low-molecular weight protein subunits. The complex exists as an obligatory dimer and forms supercomplexes (SCs) in the inner mitochondrial membrane with cytochrome c oxidase (complex IV, CIV). Heme c is required as a cofactor.

It is found in the mitochondrion inner membrane. The enzyme catalyses a quinol + 2 Fe(III)-[cytochrome c](out) = a quinone + 2 Fe(II)-[cytochrome c](out) + 2 H(+)(out). In terms of biological role, component of the ubiquinol-cytochrome c oxidoreductase, a multisubunit transmembrane complex that is part of the mitochondrial electron transport chain which drives oxidative phosphorylation. The respiratory chain contains 3 multisubunit complexes succinate dehydrogenase (complex II, CII), ubiquinol-cytochrome c oxidoreductase (cytochrome b-c1 complex, complex III, CIII) and cytochrome c oxidase (complex IV, CIV), that cooperate to transfer electrons derived from NADH and succinate to molecular oxygen, creating an electrochemical gradient over the inner membrane that drives transmembrane transport and the ATP synthase. The cytochrome b-c1 complex catalyzes electron transfer from ubiquinol to cytochrome c, linking this redox reaction to translocation of protons across the mitochondrial inner membrane, with protons being carried across the membrane as hydrogens on the quinol. In the process called Q cycle, 2 protons are consumed from the matrix, 4 protons are released into the intermembrane space and 2 electrons are passed to cytochrome c. Cytochrome c1 is a catalytic core subunit containing a c-type heme. It transfers electrons from the [2Fe-2S] iron-sulfur cluster of the Rieske protein to cytochrome c. This Schizosaccharomyces pombe (strain 972 / ATCC 24843) (Fission yeast) protein is Cytochrome c1, heme protein, mitochondrial (cyt1).